The following is a 156-amino-acid chain: Ribosome maturation factor RimP (156 aa).

The protein belongs to the RimP family.

Its subcellular location is the cytoplasm. Functionally, required for maturation of 30S ribosomal subunits. This chain is Ribosome maturation factor RimP, found in Lysinibacillus sphaericus (strain C3-41).